The sequence spans 145 residues: Large ribosomal subunit protein bL19 (145 aa).

This sequence belongs to the bacterial ribosomal protein bL19 family.

In terms of biological role, this protein is located at the 30S-50S ribosomal subunit interface and may play a role in the structure and function of the aminoacyl-tRNA binding site. The polypeptide is Large ribosomal subunit protein bL19 (Brucella anthropi (strain ATCC 49188 / DSM 6882 / CCUG 24695 / JCM 21032 / LMG 3331 / NBRC 15819 / NCTC 12168 / Alc 37) (Ochrobactrum anthropi)).